Reading from the N-terminus, the 590-residue chain is Phosphomethylpyrimidine synthase (590 aa).

Residues N197, M226, Y255, H291, 311-313 (SRG), 352-355 (DGLR), and E391 contribute to the substrate site. H395 lines the Zn(2+) pocket. Substrate is bound at residue Y418. H459 serves as a coordination point for Zn(2+). C539, C542, and C547 together coordinate [4Fe-4S] cluster.

It belongs to the ThiC family. [4Fe-4S] cluster is required as a cofactor.

It carries out the reaction 5-amino-1-(5-phospho-beta-D-ribosyl)imidazole + S-adenosyl-L-methionine = 4-amino-2-methyl-5-(phosphooxymethyl)pyrimidine + CO + 5'-deoxyadenosine + formate + L-methionine + 3 H(+). Its pathway is cofactor biosynthesis; thiamine diphosphate biosynthesis. Catalyzes the synthesis of the hydroxymethylpyrimidine phosphate (HMP-P) moiety of thiamine from aminoimidazole ribotide (AIR) in a radical S-adenosyl-L-methionine (SAM)-dependent reaction. The sequence is that of Phosphomethylpyrimidine synthase from Bacillus subtilis (strain 168).